We begin with the raw amino-acid sequence, 388 residues long: L-lactate dehydrogenase (388 aa).

In terms of domain architecture, FMN hydroxy acid dehydrogenase spans 1–380; that stretch reads MIISSSSDYR…SRDSLVREIE (380 aa). A substrate-binding site is contributed by tyrosine 24. Serine 106 and glutamine 127 together coordinate FMN. Tyrosine 129 is a substrate binding site. An FMN-binding site is contributed by threonine 155. Arginine 164 contacts substrate. Position 251 (lysine 251) interacts with FMN. Histidine 275 acts as the Proton acceptor in catalysis. Arginine 278 contacts substrate. 306–330 lines the FMN pocket; the sequence is DSGIRSGLDVVRMLAQGADGVLLGR.

This sequence belongs to the FMN-dependent alpha-hydroxy acid dehydrogenase family. The cofactor is FMN.

The protein localises to the cell inner membrane. It carries out the reaction (S)-lactate + A = pyruvate + AH2. In terms of biological role, catalyzes the conversion of L-lactate to pyruvate. Is coupled to the respiratory chain. This Xanthobacter autotrophicus (strain ATCC BAA-1158 / Py2) protein is L-lactate dehydrogenase.